Reading from the N-terminus, the 146-residue chain is Large ribosomal subunit protein eL28 (146 aa).

Residues 123-146 (VRAARKERSSKITFQRKAVRPKRH) form a disordered region.

This sequence belongs to the eukaryotic ribosomal protein eL28 family.

The protein is Large ribosomal subunit protein eL28 of Trypanosoma cruzi.